We begin with the raw amino-acid sequence, 481 residues long: Cysteine--tRNA ligase (481 aa).

C27 provides a ligand contact to Zn(2+). Positions P29–N39 match the 'HIGH' region motif. Residues C222, H247, and E251 each contribute to the Zn(2+) site. The 'KMSKS' region motif lies at K279–S283. Position 282 (K282) interacts with ATP.

The protein belongs to the class-I aminoacyl-tRNA synthetase family. As to quaternary structure, monomer. Requires Zn(2+) as cofactor.

It localises to the cytoplasm. The enzyme catalyses tRNA(Cys) + L-cysteine + ATP = L-cysteinyl-tRNA(Cys) + AMP + diphosphate. The chain is Cysteine--tRNA ligase from Borrelia hermsii (strain HS1 / DAH).